The following is a 472-amino-acid chain: uncharacterized protein (472 aa).

A run of 6 helical transmembrane segments spans residues isoleucine 4–isoleucine 24, alanine 27–phenylalanine 47, alanine 56–valine 76, isoleucine 99–valine 119, leucine 140–threonine 160, and isoleucine 176–leucine 196. A disordered region spans residues glycine 209–alanine 229. Positions alanine 220–alanine 229 are enriched in low complexity. The next 5 helical transmembrane spans lie at alanine 240–leucine 260, alanine 286–phenylalanine 306, isoleucine 323–isoleucine 343, threonine 372–methionine 392, and isoleucine 448–leucine 468.

This sequence belongs to the CitM (TC 2.A.11) transporter family.

It is found in the cell membrane. This is an uncharacterized protein from Bacillus subtilis (strain 168).